We begin with the raw amino-acid sequence, 277 residues long: MEMO1 family protein MTH_45 (277 aa).

Belongs to the MEMO1 family.

The protein is MEMO1 family protein MTH_45 of Methanothermobacter thermautotrophicus (strain ATCC 29096 / DSM 1053 / JCM 10044 / NBRC 100330 / Delta H) (Methanobacterium thermoautotrophicum).